A 199-amino-acid polypeptide reads, in one-letter code: Recombination protein RecR (199 aa).

Residues 58–73 form a C4-type zinc finger; the sequence is CARCGNITSADLCDIC. Positions 81–176 constitute a Toprim domain; sequence GELCVVEDVA…QVTSLAQGVP (96 aa).

The protein belongs to the RecR family.

May play a role in DNA repair. It seems to be involved in an RecBC-independent recombinational process of DNA repair. It may act with RecF and RecO. The polypeptide is Recombination protein RecR (Cereibacter sphaeroides (strain ATCC 17025 / ATH 2.4.3) (Rhodobacter sphaeroides)).